The sequence spans 259 residues: Small ribosomal subunit protein mS23 (259 aa).

This sequence belongs to the mitochondrion-specific ribosomal protein mS23 family. Component of the mitochondrial small ribosomal subunit.

The protein resides in the mitochondrion. The chain is Small ribosomal subunit protein mS23 (RSM25) from Pyricularia oryzae (strain 70-15 / ATCC MYA-4617 / FGSC 8958) (Rice blast fungus).